A 310-amino-acid polypeptide reads, in one-letter code: Ribonuclease HIII (310 aa).

The region spanning 91–307 (YNCIGSDEAG…REKAQNLVTK (217 aa)) is the RNase H type-2 domain. A divalent metal cation-binding residues include Asp97, Glu98, and Asp202.

Belongs to the RNase HII family. RnhC subfamily. The cofactor is Mn(2+). It depends on Mg(2+) as a cofactor.

The protein resides in the cytoplasm. It catalyses the reaction Endonucleolytic cleavage to 5'-phosphomonoester.. Its function is as follows. Endonuclease that specifically degrades the RNA of RNA-DNA hybrids. The chain is Ribonuclease HIII from Staphylococcus haemolyticus (strain JCSC1435).